A 374-amino-acid polypeptide reads, in one-letter code: Queuine tRNA-ribosyltransferase (374 aa).

Residue Asp-89 is the Proton acceptor of the active site. Substrate-binding positions include 89 to 93 (DSGGF), Asp-143, Gln-185, and Gly-212. An RNA binding region spans residues 243–249 (GVGKPED). The active-site Nucleophile is the Asp-262. Positions 267 to 271 (TRNAR) are RNA binding; important for wobble base 34 recognition. Positions 300, 302, 305, and 331 each coordinate Zn(2+).

This sequence belongs to the queuine tRNA-ribosyltransferase family. As to quaternary structure, homodimer. Within each dimer, one monomer is responsible for RNA recognition and catalysis, while the other monomer binds to the replacement base PreQ1. Zn(2+) serves as cofactor.

It carries out the reaction 7-aminomethyl-7-carbaguanine + guanosine(34) in tRNA = 7-aminomethyl-7-carbaguanosine(34) in tRNA + guanine. The protein operates within tRNA modification; tRNA-queuosine biosynthesis. Functionally, catalyzes the base-exchange of a guanine (G) residue with the queuine precursor 7-aminomethyl-7-deazaguanine (PreQ1) at position 34 (anticodon wobble position) in tRNAs with GU(N) anticodons (tRNA-Asp, -Asn, -His and -Tyr). Catalysis occurs through a double-displacement mechanism. The nucleophile active site attacks the C1' of nucleotide 34 to detach the guanine base from the RNA, forming a covalent enzyme-RNA intermediate. The proton acceptor active site deprotonates the incoming PreQ1, allowing a nucleophilic attack on the C1' of the ribose to form the product. After dissociation, two additional enzymatic reactions on the tRNA convert PreQ1 to queuine (Q), resulting in the hypermodified nucleoside queuosine (7-(((4,5-cis-dihydroxy-2-cyclopenten-1-yl)amino)methyl)-7-deazaguanosine). This Saccharophagus degradans (strain 2-40 / ATCC 43961 / DSM 17024) protein is Queuine tRNA-ribosyltransferase.